The following is a 155-amino-acid chain: 2-C-methyl-D-erythritol 2,4-cyclodiphosphate synthase (155 aa).

A divalent metal cation-binding residues include Asp-10, His-12, and His-46. 10–12 (DSH) is a 4-CDP-2-C-methyl-D-erythritol 2-phosphate binding site. 4-CDP-2-C-methyl-D-erythritol 2-phosphate-binding positions include 60-62 (DIG), 65-69 (FDEND), and Lys-140.

It belongs to the IspF family. In terms of assembly, homotrimer. A divalent metal cation serves as cofactor.

It carries out the reaction 4-CDP-2-C-methyl-D-erythritol 2-phosphate = 2-C-methyl-D-erythritol 2,4-cyclic diphosphate + CMP. It functions in the pathway isoprenoid biosynthesis; isopentenyl diphosphate biosynthesis via DXP pathway; isopentenyl diphosphate from 1-deoxy-D-xylulose 5-phosphate: step 4/6. In terms of biological role, involved in the biosynthesis of isopentenyl diphosphate (IPP) and dimethylallyl diphosphate (DMAPP), two major building blocks of isoprenoid compounds. Catalyzes the conversion of 4-diphosphocytidyl-2-C-methyl-D-erythritol 2-phosphate (CDP-ME2P) to 2-C-methyl-D-erythritol 2,4-cyclodiphosphate (ME-CPP) with a corresponding release of cytidine 5-monophosphate (CMP). The protein is 2-C-methyl-D-erythritol 2,4-cyclodiphosphate synthase of Mycoplasmoides gallisepticum (strain R(low / passage 15 / clone 2)) (Mycoplasma gallisepticum).